Here is a 270-residue protein sequence, read N- to C-terminus: Elongation factor Ts (270 aa).

The tract at residues 75-78 (TDFV) is involved in Mg(2+) ion dislocation from EF-Tu.

The protein belongs to the EF-Ts family.

The protein resides in the cytoplasm. Its function is as follows. Associates with the EF-Tu.GDP complex and induces the exchange of GDP to GTP. It remains bound to the aminoacyl-tRNA.EF-Tu.GTP complex up to the GTP hydrolysis stage on the ribosome. This chain is Elongation factor Ts, found in Cutibacterium acnes (strain DSM 16379 / KPA171202) (Propionibacterium acnes).